The primary structure comprises 224 residues: Cytidylate kinase (224 aa).

11–19 contacts ATP; sequence GPAAAGKST.

This sequence belongs to the cytidylate kinase family. Type 1 subfamily.

Its subcellular location is the cytoplasm. The catalysed reaction is CMP + ATP = CDP + ADP. The enzyme catalyses dCMP + ATP = dCDP + ADP. This chain is Cytidylate kinase, found in Geobacillus thermodenitrificans (strain NG80-2).